A 691-amino-acid polypeptide reads, in one-letter code: DNA ligase (691 aa).

Residues 41 to 45, 90 to 91, and Glu-130 contribute to the NAD(+) site; these read DAEYD and SL. Lys-132 functions as the N6-AMP-lysine intermediate in the catalytic mechanism. NAD(+) contacts are provided by Arg-153, Glu-190, Lys-307, and Lys-331. Cys-425, Cys-428, Cys-443, and Cys-449 together coordinate Zn(2+). Residues 610-691 enclose the BRCT domain; that stretch reads APQGVLAGKT…LHQLLEGNTP (82 aa).

The protein belongs to the NAD-dependent DNA ligase family. LigA subfamily. The cofactor is Mg(2+). Requires Mn(2+) as cofactor.

It carries out the reaction NAD(+) + (deoxyribonucleotide)n-3'-hydroxyl + 5'-phospho-(deoxyribonucleotide)m = (deoxyribonucleotide)n+m + AMP + beta-nicotinamide D-nucleotide.. DNA ligase that catalyzes the formation of phosphodiester linkages between 5'-phosphoryl and 3'-hydroxyl groups in double-stranded DNA using NAD as a coenzyme and as the energy source for the reaction. It is essential for DNA replication and repair of damaged DNA. The chain is DNA ligase from Burkholderia ambifaria (strain MC40-6).